The following is a 137-amino-acid chain: Altered inheritance of mitochondria protein 11 (137 aa).

The next 2 helical transmembrane spans lie at 20–37 (YGAA…SRAI) and 66–88 (LTYA…CWAL).

This sequence belongs to the AIM11 family.

Its subcellular location is the membrane. The protein is Altered inheritance of mitochondria protein 11 (AIM11) of Saccharomyces cerevisiae (strain RM11-1a) (Baker's yeast).